A 198-amino-acid polypeptide reads, in one-letter code: Recombination protein RecR (198 aa).

Residues 57–72 form a C4-type zinc finger; the sequence is CSVCHNITDTDPCRIC. Residues 80–175 enclose the Toprim domain; the sequence is SVICVVQDAK…KVTRIAHGLP (96 aa).

This sequence belongs to the RecR family.

In terms of biological role, may play a role in DNA repair. It seems to be involved in an RecBC-independent recombinational process of DNA repair. It may act with RecF and RecO. The sequence is that of Recombination protein RecR from Halalkalibacterium halodurans (strain ATCC BAA-125 / DSM 18197 / FERM 7344 / JCM 9153 / C-125) (Bacillus halodurans).